Consider the following 1035-residue polypeptide: POM121-like protein 2 (1035 aa).

Disordered regions lie at residues 1 to 37, 177 to 213, 286 to 343, 415 to 508, 754 to 791, and 972 to 1035; these read MGSF…PLHQ, LFPE…PRPG, IKKE…LGYA, LGPL…QSTL, SPLG…QPAL, and NTPV…AYKK. Residues 27–37 show a composition bias toward basic residues; sequence TKRRPPQPLHQ. Positions 309–319 are enriched in low complexity; it reads GGSESSGQQNQ. 3 stretches are compositionally biased toward polar residues: residues 320–330, 420–431, and 445–462; these read KIPQLPSSPEN, SPQSTGEATSVA, and GCSQ…SKPT. The segment covering 464–481 has biased composition (low complexity); it reads TFILLTPTSPTLPVTDTT. Pro residues predominate over residues 493–502; it reads PMPPDPPAPP. A compositionally biased stretch (low complexity) spans 1000–1016; that stretch reads RGPFRSSASSFSIGAKS. Over residues 1017 to 1035 the composition is skewed to basic residues; sequence KTPKNREKGHSRRHHAYKK.

The protein belongs to the POM121 family.

This is POM121-like protein 2 (POM121L2) from Homo sapiens (Human).